Consider the following 273-residue polypeptide: Non-homologous end joining protein Ku (273 aa).

One can recognise a Ku domain in the interval 13–190; that stretch reads KLSLVTCPVA…FTGIEKKSDA (178 aa). The tract at residues 227-251 is disordered; sequence KKKAKKPSKAKASKSTKGDDEEKSN. Basic residues predominate over residues 228-240; it reads KKAKKPSKAKASK.

Belongs to the prokaryotic Ku family. Homodimer. Interacts with LigD.

In terms of biological role, with LigD forms a non-homologous end joining (NHEJ) DNA repair enzyme, which repairs dsDNA breaks with reduced fidelity. Binds linear dsDNA with 5'- and 3'- overhangs but not closed circular dsDNA nor ssDNA. Recruits and stimulates the ligase activity of LigD. The polypeptide is Non-homologous end joining protein Ku (Allorhizobium ampelinum (strain ATCC BAA-846 / DSM 112012 / S4) (Agrobacterium vitis (strain S4))).